A 676-amino-acid chain; its full sequence is Cysteine-rich receptor-like protein kinase 4 (676 aa).

Positions M1–A16 are cleaved as a signal peptide. Residues D17–S287 lie on the Extracellular side of the membrane. 2 consecutive Gnk2-homologous domains span residues H31–I135 and I146–F246. Residues N33, N46, N64, N152, N181, N243, and N248 are each glycosylated (N-linked (GlcNAc...) asparagine). Residues T252–S279 are disordered. The N-linked (GlcNAc...) asparagine glycan is linked to N286. Residues S288–F308 form a helical membrane-spanning segment. Residues S309 to R676 are Cytoplasmic-facing. Positions F351–L631 constitute a Protein kinase domain. Residues L357 to V365 and K379 contribute to the ATP site. Phosphotyrosine is present on Y424. The active-site Proton acceptor is the D476. The residue at position 516 (T516) is a Phosphothreonine. Residue Y524 is modified to Phosphotyrosine.

It belongs to the protein kinase superfamily. Ser/Thr protein kinase family. CRK subfamily.

It is found in the membrane. The enzyme catalyses L-seryl-[protein] + ATP = O-phospho-L-seryl-[protein] + ADP + H(+). It carries out the reaction L-threonyl-[protein] + ATP = O-phospho-L-threonyl-[protein] + ADP + H(+). The polypeptide is Cysteine-rich receptor-like protein kinase 4 (CRK4) (Arabidopsis thaliana (Mouse-ear cress)).